The following is a 348-amino-acid chain: Probable WRKY transcription factor 27 (348 aa).

4 disordered regions span residues 19–52 (VSTT…ASSS), 67–90 (TTTT…SPSP), 133–153 (LLQQ…QQKR), and 218–320 (GEHT…LIPN). The span at 75–85 (SPPPLLPPPKA) shows a compositional bias: pro residues. Over residues 133-142 (LLQQQSQPPL) the composition is skewed to low complexity. Over residues 143 to 153 (RSRKRKNQQKR) the composition is skewed to basic residues. A DNA-binding region (WRKY) is located at residues 159-225 (TQENLSSDLW…YTGEHTHPRP (67 aa)). Positions 228–242 (RNSLAGSTRNKSQPV) are enriched in polar residues. Over residues 274 to 315 (DVQETNGDEDMVGQEVNMEEEEEEEEVEEDDEEEEDDDDVDD) the composition is skewed to acidic residues.

It belongs to the WRKY group II-e family.

Its subcellular location is the nucleus. Transcription factor. Interacts specifically with the W box (5'-(T)TGAC[CT]-3'), a frequently occurring elicitor-responsive cis-acting element. In Arabidopsis thaliana (Mouse-ear cress), this protein is Probable WRKY transcription factor 27 (WRKY27).